A 537-amino-acid chain; its full sequence is Di/tripeptide-binding protein 1 (537 aa).

Positions 1 to 29 (MRRNAVIRSAIMPSLLGAALVAAVPQAFA) are cleaved as a signal peptide.

Belongs to the bacterial solute-binding protein 5 family. The complex is composed of two ATP-binding proteins (DppD and DppF), two transmembrane proteins (DppB and DppC) and a solute-binding protein (DppA1). Five orthologous SBPs (DppA1-A5) are present in P.aeruginosa, which increases the substrate specificity of the DppBCDF transporter.

Its function is as follows. Part of the ABC transporter DppABCDF involved in the uptake of various di/tripeptides. Prefers dipeptides with acidic residues at the C-terminal end. Involved in the uptake of phaseolotoxin, a toxic tripeptide inhibiting the enzyme ornithine carbamoyltransferase. This Pseudomonas aeruginosa (strain UCBPP-PA14) protein is Di/tripeptide-binding protein 1.